An 881-amino-acid polypeptide reads, in one-letter code: Sodium/potassium/calcium exchanger Nckx30C (881 aa).

Residues 1 to 194 are Extracellular-facing; sequence MLQPTTCSKQ…SRCRSRRCLR (194 aa). N-linked (GlcNAc...) asparagine glycosylation is present at Asn69. Disordered regions lie at residues 79 to 111, 149 to 181, 215 to 255, and 272 to 315; these read DMLS…APSD, AKTR…LLHP, AAKP…TSGE, and GLEE…TTKT. The span at 85–95 shows a compositional bias: polar residues; sequence RSRSSSTTIDF. Positions 149 to 175 are enriched in low complexity; it reads AKTRSRTAAQLPATSAASATSSRGASA. A helical transmembrane segment spans residues 195-215; that stretch reads LPIYSILLLCLTTQGLGLGDA. Over 216 to 330 the chain is Cytoplasmic; the sequence is AKPRPAKQHF…DLFTKEQLEN (115 aa). Positions 228-240 are enriched in low complexity; the sequence is SNSNSPNQNQNHN. The segment covering 296-315 has biased composition (polar residues); the sequence is AGNQRGINDTHNDNSTTTKT. A helical transmembrane segment spans residues 331–351; the sequence is GAVILHIIGVIYMFVALAIVC. Residues 352–375 are Extracellular-facing; it reads DEFFVPSLDVIIEKLGITDDVAGA. The Alpha-1 repeat unit spans residues 372-412; the sequence is VAGATFMAAGGSAPELFTSVIGVFVSFDDVGIGTIVGSAVF. Residues 376-396 form a helical membrane-spanning segment; that stretch reads TFMAAGGSAPELFTSVIGVFV. Residues 397–402 lie on the Cytoplasmic side of the membrane; sequence SFDDVG. The chain crosses the membrane as a helical span at residues 403-423; the sequence is IGTIVGSAVFNILFVIGMCAL. Residues 424-433 lie on the Extracellular side of the membrane; that stretch reads FSKTVLSLTW. A helical transmembrane segment spans residues 434–454; sequence WPLFRDCSFYSISLLVLIYFF. The Cytoplasmic portion of the chain corresponds to 455-458; it reads RDNR. Residues 459–479 traverse the membrane as a helical segment; that stretch reads IFWWEALILFTIYIGYVAFMK. The Extracellular segment spans residues 480-720; sequence WNVQVETCVK…PDTRTPRGKR (241 aa). The segment at 508-565 is disordered; it reads PAGNAANSSETSMATQPGGSVTSRAASETRSGPPGSSNAGATGNSSGGGGTSGSTQTG. A compositionally biased stretch (polar residues) spans 512–537; it reads AANSSETSMATQPGGSVTSRAASETR. Residues Asn514 and Asn551 are each glycosylated (N-linked (GlcNAc...) asparagine). Low complexity predominate over residues 542–551; sequence GSSNAGATGN. Residues 721 to 741 form a helical membrane-spanning segment; the sequence is FFPVTFIGSIVWIAAFSYLMV. The Cytoplasmic segment spans residues 742–756; the sequence is WWANVAGDTARIPPE. A helical transmembrane segment spans residues 757 to 777; it reads VMGLTFLAAGTSIPDLITSVI. An Alpha-2 repeat occupies 764–795; sequence AAGTSIPDLITSVIVARKGFGDMAVSSSVGSN. At 778-795 the chain is on the extracellular side; it reads VARKGFGDMAVSSSVGSN. A helical transmembrane segment spans residues 796–816; it reads IFDVTVGLPIPWLLYGIIYGA. The Cytoplasmic segment spans residues 817–822; the sequence is PVEVNS. A helical transmembrane segment spans residues 823–843; it reads VGMVCSITILFMMLVFVVMSI. Over 844-852 the chain is Extracellular; the sequence is ACFRWRMNK. A helical membrane pass occupies residues 853–873; sequence GLGFTMFLLYFAFVAVSLMFE. The Cytoplasmic segment spans residues 874–881; it reads YDVITCPF.

Belongs to the Ca(2+):cation antiporter (CaCA) (TC 2.A.19) family. SLC24A subfamily. In terms of tissue distribution, expressed in the adult nervous system. Expressed in the photoreceptor cells as well as in the lamina, medulla, and optic lobes of the brain.

It is found in the membrane. Functionally, may function in the removal and maintenance of calcium homeostasis during signaling in the adult and in signaling events during embryogenesis and patterning of imaginal disks. Transports one Ca(2+) and 1 K(+) in exchange for 4 Na(+). In Drosophila melanogaster (Fruit fly), this protein is Sodium/potassium/calcium exchanger Nckx30C (Nckx30C).